The primary structure comprises 282 residues: 4-diphosphocytidyl-2-C-methyl-D-erythritol kinase (282 aa).

The active site involves Lys-12. Residue 95–105 (PMGGGIGGGSS) coordinates ATP. Residue Asp-137 is part of the active site.

It belongs to the GHMP kinase family. IspE subfamily.

It catalyses the reaction 4-CDP-2-C-methyl-D-erythritol + ATP = 4-CDP-2-C-methyl-D-erythritol 2-phosphate + ADP + H(+). Its pathway is isoprenoid biosynthesis; isopentenyl diphosphate biosynthesis via DXP pathway; isopentenyl diphosphate from 1-deoxy-D-xylulose 5-phosphate: step 3/6. Catalyzes the phosphorylation of the position 2 hydroxy group of 4-diphosphocytidyl-2C-methyl-D-erythritol. The protein is 4-diphosphocytidyl-2-C-methyl-D-erythritol kinase of Pseudomonas aeruginosa (strain UCBPP-PA14).